The following is a 563-amino-acid chain: Methylcrotonoyl-CoA carboxylase beta chain, mitochondrial (563 aa).

The transit peptide at 1 to 22 directs the protein to the mitochondrion; that stretch reads MWGALRSVLRPCSRASVPRQRA. One can recognise a CoA carboxyltransferase N-terminal domain in the interval 49 to 306; it reads MKALVNQLHE…QKKLDVTVEP (258 aa). Positions 49 to 555 are carboxyltransferase; sequence MKALVNQLHE…SAALNAPIQR (507 aa). Residue Lys-70 is modified to N6-acetyllysine; alternate. Lys-70 is subject to N6-succinyllysine; alternate. Residue Lys-141 is modified to N6-succinyllysine. One can recognise a CoA carboxyltransferase C-terminal domain in the interval 309–555; it reads EPLFPADELY…SAALNAPIQR (247 aa). The segment at 343–372 is acyl-CoA binding; the sequence is RFNEFKALYGDTLVTGFARIFGYPVGIIGN. The residue at position 433 (Lys-433) is an N6-succinyllysine. Lys-495 carries the post-translational modification N6-acetyllysine; alternate. Lys-495 bears the N6-succinyllysine; alternate mark. Lys-511 carries the N6-acetyllysine modification.

It belongs to the AccD/PCCB family. In terms of assembly, probably a dodecamer composed of six biotin-containing alpha subunits (MCCC1) and six beta (MCCC2) subunits.

The protein resides in the mitochondrion matrix. It catalyses the reaction 3-methylbut-2-enoyl-CoA + hydrogencarbonate + ATP = 3-methyl-(2E)-glutaconyl-CoA + ADP + phosphate + H(+). It participates in amino-acid degradation; L-leucine degradation; (S)-3-hydroxy-3-methylglutaryl-CoA from 3-isovaleryl-CoA: step 2/3. Functionally, carboxyltransferase subunit of the 3-methylcrotonyl-CoA carboxylase, an enzyme that catalyzes the conversion of 3-methylcrotonyl-CoA to 3-methylglutaconyl-CoA, a critical step for leucine and isovaleric acid catabolism. The sequence is that of Methylcrotonoyl-CoA carboxylase beta chain, mitochondrial (Mccc2) from Rattus norvegicus (Rat).